The primary structure comprises 265 residues: Mlc titration factor A (265 aa).

Residues H111, H148, H152, and E211 each coordinate Zn(2+).

The protein belongs to the MtfA family. Interacts with Mlc. It depends on Zn(2+) as a cofactor.

The protein localises to the cytoplasm. Its function is as follows. Involved in the modulation of the activity of the glucose-phosphotransferase system (glucose-PTS). Interacts with the transcriptional repressor Mlc, preventing its interaction with DNA and leading to the modulation of expression of genes regulated by Mlc, including ptsG, which encodes the PTS system glucose-specific EIICB component. Functionally, shows zinc-dependent metallopeptidase activity. The sequence is that of Mlc titration factor A from Pectobacterium atrosepticum (strain SCRI 1043 / ATCC BAA-672) (Erwinia carotovora subsp. atroseptica).